A 326-amino-acid polypeptide reads, in one-letter code: MASLRLFSTNHQSLLLPSSLSQKTLISSPRFVNNPSRRSPIRSVLQFNRKPELAGETPRIVVITSGKGGVGKTTTTANVGLSLARYGFSVVAIDADLGLRNLDLLLGLENRVNYTCVEVINGDCRLDQALVRDKRWSNFELLCISKPRSKLPMGFGGKALEWLVDALKTRPEGSPDFIIIDCPAGIDAGFITAITPANEAVLVTTPDITALRDADRVTGLLECDGIRDIKMIVNRVRTDMIKGEDMMSVLDVQEMLGLSLLGVIPEDSEVIRSTNRGFPLVLNKPPTLAGLAFEQAAWRLVEQDSMKAVMVEEEPKKRGFFSFFGG.

The N-terminal 62 residues, 1–62, are a transit peptide targeting the chloroplast; the sequence is MASLRLFSTN…LAGETPRIVV (62 aa). Residue 67 to 74 participates in ATP binding; the sequence is KGGVGKTT.

It belongs to the ParA family. MinD subfamily. Homodimer. Interacts with MINE1. Binds to ARC3. Interacts with MCD1. Interacts with CDP1/PARC6.

The protein localises to the plastid. It localises to the chloroplast inner membrane. Stimulated ATPase activity by MINE1. In terms of biological role, together with ARC3 and MCD1, regulates FtsZ ring positioning in chloroplasts in an ARC6-dependent manner. Calcium-dependent ATPase required for the correct placement of the plastid division site. Inhibits FtsZ filament and ring formation in the plastid. Mediates inhibition of plastid division. In cooperation with MINE1, prevents FtsZ ring formation anywhere outside of the mid-plastids. This chain is Septum site-determining protein minD homolog, chloroplastic, found in Arabidopsis thaliana (Mouse-ear cress).